We begin with the raw amino-acid sequence, 590 residues long: Aspartate--tRNA ligase (590 aa).

An L-aspartate-binding site is contributed by Glu-172. An aspartate region spans residues 196–199 (QLFK). An L-aspartate-binding site is contributed by Arg-218. ATP-binding positions include 218 to 220 (RDE) and Gln-227. Residue His-449 coordinates L-aspartate. Glu-483 serves as a coordination point for ATP. Arg-490 contacts L-aspartate. Residue 535 to 538 (GLDR) participates in ATP binding.

The protein belongs to the class-II aminoacyl-tRNA synthetase family. Type 1 subfamily. Homodimer.

It localises to the cytoplasm. The catalysed reaction is tRNA(Asp) + L-aspartate + ATP = L-aspartyl-tRNA(Asp) + AMP + diphosphate. Functionally, catalyzes the attachment of L-aspartate to tRNA(Asp) in a two-step reaction: L-aspartate is first activated by ATP to form Asp-AMP and then transferred to the acceptor end of tRNA(Asp). The polypeptide is Aspartate--tRNA ligase (Glaesserella parasuis serovar 5 (strain SH0165) (Haemophilus parasuis)).